A 260-amino-acid polypeptide reads, in one-letter code: uncharacterized protein (260 aa).

The N-terminal stretch at 1-22 is a signal peptide; that stretch reads MGYLKRFALYISILVLIVMVAG. The N-palmitoyl cysteine moiety is linked to residue Cys-23. Cys-23 carries S-diacylglycerol cysteine lipidation.

It belongs to the staphylococcal tandem lipoprotein family.

It is found in the cell membrane. This is an uncharacterized protein from Staphylococcus aureus (strain bovine RF122 / ET3-1).